A 91-amino-acid polypeptide reads, in one-letter code: Alpha-defensin-related sequence 2 (91 aa).

Positions Met-1–Ala-19 are cleaved as a signal peptide. Residues Asp-20 to Ala-58 constitute a propeptide that is removed on maturation. A disordered region spans residues Ile-22–Asp-48. The span at Glu-27 to Gln-40 shows a compositional bias: basic and acidic residues. Tandem repeats lie at residues Cys-65–Gln-67, Cys-68–Arg-70, Cys-71–Ser-73, Cys-74–Ser-76, Cys-77–Arg-79, Cys-80–Arg-82, and Cys-83–Arg-85. A 7 X 3 AA tandem repeats of C-P-X region spans residues Cys-65–Arg-85.

It belongs to the alpha-defensin family. As to expression, small bowel, spleen, colon, kidney, liver, stomach and femur marrow.

It localises to the secreted. In terms of biological role, apparent precursor of a secreted, cationic, proline- and cysteine-rich peptide that contains Cys-Pro-Xaa repeats. Unlike cryptdin, the proposed mature peptide region lacks the structural motif characteristic of defensins. It may have microbicidal activities. This Mus musculus (Mouse) protein is Alpha-defensin-related sequence 2 (Defa-rs2).